The chain runs to 428 residues: MPRPGKSSYSDQKPPYSYISLTAMAIQHSAEKMLPLSDIYKFIMERFPYYREHTQRWQNSLRHNLSFNDCFIKIPRRPDQPGKGSFWALHPDCGDMFENGSFLRRRKRFKVLRADHAHLHSGSSKGAPGTGPGGHLHPHHPHHAHHHHHHHHHAAHHHHHHHPPQPPPPPPPHMVPYFHQQPAPAPQPPHLPSQPAQQPQPQSQPPQTSHPGKMQEAAAVAAAAAAAAAAAVGSVGRLSQFPPYGLGSAAAAAAAAAASTTGFKHPFAIENIIGRDYKGVLQAGGLPLASVMHHLGYPVPGQLSNVVGSVWPHVGVMDSVAAAAAAAAAAGVPVGPEYGAFGVPVKALCHSANQSLPAVPVPIKPTPALPPVTTLPPALSVPTASQQLPAPSTVCAAAASPTAPLLEPTAAGRADSKGSSLHSVLVHS.

Positions 12–103 form a DNA-binding region, fork-head; sequence QKPPYSYISL…GDMFENGSFL (92 aa). 2 disordered regions span residues 118–217 and 408–428; these read HLHS…MQEA and PTAA…LVHS. The span at 136–163 shows a compositional bias: basic residues; the sequence is LHPHHPHHAHHHHHHHHHAAHHHHHHHP. 2 stretches are compositionally biased toward pro residues: residues 164 to 174 and 183 to 192; these read PQPPPPPPPHM and APAPQPPHLP. The span at 193–217 shows a compositional bias: low complexity; sequence SQPAQQPQPQSQPPQTSHPGKMQEA.

The protein resides in the nucleus. Functionally, transcription factor. This Mus musculus (Mouse) protein is Forkhead box protein B2 (Foxb2).